The following is a 230-amino-acid chain: Large ribosomal subunit protein uL1 (230 aa).

This sequence belongs to the universal ribosomal protein uL1 family. Part of the 50S ribosomal subunit.

Binds directly to 23S rRNA. The L1 stalk is quite mobile in the ribosome, and is involved in E site tRNA release. In terms of biological role, protein L1 is also a translational repressor protein, it controls the translation of the L11 operon by binding to its mRNA. This Leptospira borgpetersenii serovar Hardjo-bovis (strain L550) protein is Large ribosomal subunit protein uL1.